Consider the following 104-residue polypeptide: MENKAERYQKAVNITDVLEQSPFAKIIKKGLAINEINQKFNRIFPQEFHGKFRIGNMTDNSIFIETANAIVRQGILFRQTELLKLIQEEFPQVTGFEITINPGF.

This is an uncharacterized protein from Haemophilus influenzae (strain ATCC 51907 / DSM 11121 / KW20 / Rd).